A 209-amino-acid chain; its full sequence is V-type ATP synthase subunit D (209 aa).

Belongs to the V-ATPase D subunit family.

Functionally, produces ATP from ADP in the presence of a proton gradient across the membrane. The sequence is that of V-type ATP synthase subunit D (atpD) from Chlamydia pneumoniae (Chlamydophila pneumoniae).